Consider the following 172-residue polypeptide: Putative B3 domain-containing protein At1g05615 (172 aa).

Positions 69 to 169 (VDEGKIIDFE…NLAMVPLTPT (101 aa)) form a DNA-binding region, TF-B3.

The protein resides in the nucleus. This is Putative B3 domain-containing protein At1g05615 from Arabidopsis thaliana (Mouse-ear cress).